Reading from the N-terminus, the 236-residue chain is Segregation and condensation protein A (236 aa).

This sequence belongs to the ScpA family. In terms of assembly, component of a cohesin-like complex composed of ScpA, ScpB and the Smc homodimer, in which ScpA and ScpB bind to the head domain of Smc. The presence of the three proteins is required for the association of the complex with DNA.

It localises to the cytoplasm. Its function is as follows. Participates in chromosomal partition during cell division. May act via the formation of a condensin-like complex containing Smc and ScpB that pull DNA away from mid-cell into both cell halves. This chain is Segregation and condensation protein A, found in Streptococcus sanguinis (strain SK36).